A 272-amino-acid polypeptide reads, in one-letter code: PHD finger protein ALFIN-LIKE 6 (272 aa).

Gly residues predominate over residues 1–23 (MEGGGGGGGGGGGGGGGGGGGGA). Disordered regions lie at residues 1 to 24 (MEGG…GGAP) and 162 to 218 (QAKE…DNTL). Low complexity predominate over residues 168–182 (PNSSSKSNKPSSKVQ). Positions 183-200 (SKAESRSKSKLSAPKDEE) are enriched in basic and acidic residues. Residues 201 to 214 (GSGDDEGEEEEDDH) show a composition bias toward acidic residues. A PHD-type zinc finger spans residues 216–268 (NTLCGTCGTNDGKDEFWICCDNCEKWYHGKCVKITPARAEHIKQYKCPDCTNK).

It belongs to the Alfin family.

Its subcellular location is the nucleus. Functionally, histone-binding component that specifically recognizes H3 tails trimethylated on 'Lys-4' (H3K4me3), which mark transcription start sites of virtually all active genes. This chain is PHD finger protein ALFIN-LIKE 6, found in Oryza sativa subsp. japonica (Rice).